The chain runs to 462 residues: L-seryl-tRNA(Sec) selenium transferase (462 aa).

Lys-295 carries the N6-(pyridoxal phosphate)lysine modification.

Belongs to the SelA family. In terms of assembly, homodecamer; pentamer of dimers. Binds only one seryl-tRNA(Sec) per dimer. Requires pyridoxal 5'-phosphate as cofactor.

It localises to the cytoplasm. It catalyses the reaction L-seryl-tRNA(Sec) + selenophosphate + H(+) = L-selenocysteinyl-tRNA(Sec) + phosphate. It participates in aminoacyl-tRNA biosynthesis; selenocysteinyl-tRNA(Sec) biosynthesis; selenocysteinyl-tRNA(Sec) from L-seryl-tRNA(Sec) (bacterial route): step 1/1. Functionally, converts seryl-tRNA(Sec) to selenocysteinyl-tRNA(Sec) required for selenoprotein biosynthesis. The sequence is that of L-seryl-tRNA(Sec) selenium transferase from Klebsiella pneumoniae subsp. pneumoniae (strain ATCC 700721 / MGH 78578).